Consider the following 219-residue polypeptide: Probable GTP-binding protein EngB (219 aa).

Residues V31–P205 form the EngB-type G domain. GTP contacts are provided by residues G39–S46, G66–L70, D84–G87, T151–D154, and F184–S186. Positions 46 and 68 each coordinate Mg(2+).

This sequence belongs to the TRAFAC class TrmE-Era-EngA-EngB-Septin-like GTPase superfamily. EngB GTPase family. The cofactor is Mg(2+).

Functionally, necessary for normal cell division and for the maintenance of normal septation. This Shewanella baltica (strain OS223) protein is Probable GTP-binding protein EngB.